Here is a 331-residue protein sequence, read N- to C-terminus: 6-phosphogluconolactonase (331 aa).

Belongs to the cycloisomerase 2 family.

The enzyme catalyses 6-phospho-D-glucono-1,5-lactone + H2O = 6-phospho-D-gluconate + H(+). Its pathway is carbohydrate degradation; pentose phosphate pathway; D-ribulose 5-phosphate from D-glucose 6-phosphate (oxidative stage): step 2/3. Functionally, catalyzes the hydrolysis of 6-phosphogluconolactone to 6-phosphogluconate. This is 6-phosphogluconolactonase from Sodalis glossinidius (strain morsitans).